We begin with the raw amino-acid sequence, 273 residues long: Undecaprenyl-diphosphatase (273 aa).

7 helical membrane passes run 48–68 (AANT…VVVF), 89–109 (LTLL…VLFE), 116–136 (LFST…MIVA), 152–172 (ITYK…WPGF), 193–213 (ADFT…LSLL), 222–242 (ADIP…LLAI), and 252–272 (IRLV…YFLY).

This sequence belongs to the UppP family.

It is found in the cell membrane. It carries out the reaction di-trans,octa-cis-undecaprenyl diphosphate + H2O = di-trans,octa-cis-undecaprenyl phosphate + phosphate + H(+). In terms of biological role, catalyzes the dephosphorylation of undecaprenyl diphosphate (UPP). Confers resistance to bacitracin. In Geobacillus thermodenitrificans (strain NG80-2), this protein is Undecaprenyl-diphosphatase.